Reading from the N-terminus, the 293-residue chain is Protease HtpX homolog (293 aa).

Transmembrane regions (helical) follow at residues 7–26 and 30–49; these read ASLLGLLSALLIGSSYALLG and GMVMGIGLAALTNLGAWYYS. Residue His-131 coordinates Zn(2+). Glu-132 is an active-site residue. His-135 contributes to the Zn(2+) binding site. 2 consecutive transmembrane segments (helical) span residues 148–168 and 180–200; these read ATLAGAIAFLAQMVSYSFWFF and IGALLMIVLAPLSATILQLGI. A Zn(2+)-binding site is contributed by Glu-205.

Belongs to the peptidase M48B family. The cofactor is Zn(2+).

It localises to the cell inner membrane. The polypeptide is Protease HtpX homolog (Acaryochloris marina (strain MBIC 11017)).